Here is a 349-residue protein sequence, read N- to C-terminus: Beta-hexosaminidase (349 aa).

Substrate is bound by residues D64, R72, R138, and 168 to 169 (KH). The active-site Proton donor/acceptor is the H181. The Nucleophile role is filled by D252.

The protein belongs to the glycosyl hydrolase 3 family. NagZ subfamily.

The protein resides in the cytoplasm. The enzyme catalyses Hydrolysis of terminal non-reducing N-acetyl-D-hexosamine residues in N-acetyl-beta-D-hexosaminides.. It functions in the pathway cell wall biogenesis; peptidoglycan recycling. Plays a role in peptidoglycan recycling by cleaving the terminal beta-1,4-linked N-acetylglucosamine (GlcNAc) from peptide-linked peptidoglycan fragments, giving rise to free GlcNAc, anhydro-N-acetylmuramic acid and anhydro-N-acetylmuramic acid-linked peptides. The protein is Beta-hexosaminidase of Methylobacillus flagellatus (strain ATCC 51484 / DSM 6875 / VKM B-1610 / KT).